The following is a 137-amino-acid chain: uncharacterized protein (137 aa).

A helical transmembrane segment spans residues 20 to 42; sequence TVLAFKGEGALALAGLLVMAAVA.

The protein resides in the host membrane. This is an uncharacterized protein from Dryophytes versicolor (chameleon treefrog).